The sequence spans 193 residues: Peptide deformylase 2 (193 aa).

Fe cation is bound by residues C100 and H142. E143 is an active-site residue. H146 contributes to the Fe cation binding site.

It belongs to the polypeptide deformylase family. It depends on Fe(2+) as a cofactor.

It carries out the reaction N-terminal N-formyl-L-methionyl-[peptide] + H2O = N-terminal L-methionyl-[peptide] + formate. In terms of biological role, removes the formyl group from the N-terminal Met of newly synthesized proteins. Requires at least a dipeptide for an efficient rate of reaction. N-terminal L-methionine is a prerequisite for activity but the enzyme has broad specificity at other positions. This chain is Peptide deformylase 2, found in Corynebacterium efficiens (strain DSM 44549 / YS-314 / AJ 12310 / JCM 11189 / NBRC 100395).